Here is a 566-residue protein sequence, read N- to C-terminus: MAKLLSFSDDSRSALERGVNSLADAVRVTIGPRGRNVVLEKKFGAPDIVNDGVTIAKEIELDDPFENLGAKLIQQVASKTKDKAGDGTTTATVLAQAMVHEGLRNVAAGASPIELRRGMEKAVAQLVEELAQLSQSVGGNAIHQVATVSSGGDQEVGRMVSEAMDKVSADGVITVEESKSLATELEVTEGMAFDRGYSSPYFVTDADRQICEFENALLLLTDRKISSVSDLVPILESLQKSGSPLVIIAEEVEGEALATLVVNKNRGVLQVAAVRAPSFGDRRKAALADIAVLTGGTVISEDRAMTLEKVSQDDLGQVRRITISKDNTTIVAKDENRDAVNARVASIKRELDETDSEYDREKLNERIAKLAGGVAVIKVGAPTETELKNRKLRIEDALNATRAAVEEGIVAGGGTTLLHLSKGLSKLAEQLNDDQRTGVEIVQRALSAPARQIAINAGENGDVVISEIQRLNKGFNAISSTYEDLLEAGILDATKVVRLALQDAVSIASMMVTTELVIADKPEPPAPAGDGGGDPMGGMGGMGGMGGMGGMGGMGGMGGMGMPGMM.

ATP-binding positions include 29 to 32 (TIGP), 86 to 90 (DGTTT), G413, and D492. Residues 520-540 (DKPEPPAPAGDGGGDPMGGMG) form a disordered region. The span at 529–540 (GDGGGDPMGGMG) shows a compositional bias: gly residues.

This sequence belongs to the chaperonin (HSP60) family. Forms a cylinder of 14 subunits composed of two heptameric rings stacked back-to-back. Interacts with the co-chaperonin GroES.

The protein resides in the cytoplasm. It carries out the reaction ATP + H2O + a folded polypeptide = ADP + phosphate + an unfolded polypeptide.. In terms of biological role, together with its co-chaperonin GroES, plays an essential role in assisting protein folding. The GroEL-GroES system forms a nano-cage that allows encapsulation of the non-native substrate proteins and provides a physical environment optimized to promote and accelerate protein folding. This is Chaperonin GroEL 1 from Prochlorococcus marinus (strain MIT 9313).